The following is a 212-amino-acid chain: Thymidylate kinase (212 aa).

ATP is bound at residue 11 to 18 (GPEGAGKT).

The protein belongs to the thymidylate kinase family.

The enzyme catalyses dTMP + ATP = dTDP + ADP. Its function is as follows. Phosphorylation of dTMP to form dTDP in both de novo and salvage pathways of dTTP synthesis. This is Thymidylate kinase from Streptococcus pneumoniae serotype 19F (strain G54).